A 447-amino-acid chain; its full sequence is Cytochrome P450 BJ-4 homolog (447 aa).

A heme-binding site is contributed by cysteine 392.

It belongs to the cytochrome P450 family. Requires heme as cofactor.

Functionally, cytochromes P450 are a group of heme-thiolate monooxygenases. They oxidize a variety of structurally unrelated compounds, including steroids, fatty acids, and xenobiotics. This chain is Cytochrome P450 BJ-4 homolog (cyp117A2), found in Sinorhizobium fredii (strain NBRC 101917 / NGR234).